We begin with the raw amino-acid sequence, 237 residues long: Thiamine-phosphate synthase (237 aa).

Residues 57-61 (QLRDK) and Asn98 contribute to the 4-amino-2-methyl-5-(diphosphooxymethyl)pyrimidine site. Asp99 and Asp118 together coordinate Mg(2+). Ser136 contacts 4-amino-2-methyl-5-(diphosphooxymethyl)pyrimidine. 162–164 (TPT) contributes to the 2-[(2R,5Z)-2-carboxy-4-methylthiazol-5(2H)-ylidene]ethyl phosphate binding site. Lys165 contributes to the 4-amino-2-methyl-5-(diphosphooxymethyl)pyrimidine binding site. A 2-[(2R,5Z)-2-carboxy-4-methylthiazol-5(2H)-ylidene]ethyl phosphate-binding site is contributed by Gly193.

Belongs to the thiamine-phosphate synthase family. Mg(2+) serves as cofactor.

The catalysed reaction is 2-[(2R,5Z)-2-carboxy-4-methylthiazol-5(2H)-ylidene]ethyl phosphate + 4-amino-2-methyl-5-(diphosphooxymethyl)pyrimidine + 2 H(+) = thiamine phosphate + CO2 + diphosphate. It carries out the reaction 2-(2-carboxy-4-methylthiazol-5-yl)ethyl phosphate + 4-amino-2-methyl-5-(diphosphooxymethyl)pyrimidine + 2 H(+) = thiamine phosphate + CO2 + diphosphate. The enzyme catalyses 4-methyl-5-(2-phosphooxyethyl)-thiazole + 4-amino-2-methyl-5-(diphosphooxymethyl)pyrimidine + H(+) = thiamine phosphate + diphosphate. It participates in cofactor biosynthesis; thiamine diphosphate biosynthesis; thiamine phosphate from 4-amino-2-methyl-5-diphosphomethylpyrimidine and 4-methyl-5-(2-phosphoethyl)-thiazole: step 1/1. Condenses 4-methyl-5-(beta-hydroxyethyl)thiazole monophosphate (THZ-P) and 2-methyl-4-amino-5-hydroxymethyl pyrimidine pyrophosphate (HMP-PP) to form thiamine monophosphate (TMP). This chain is Thiamine-phosphate synthase, found in Mycolicibacterium gilvum (strain PYR-GCK) (Mycobacterium gilvum (strain PYR-GCK)).